A 222-amino-acid polypeptide reads, in one-letter code: Cyclin-dependent kinase inhibitor 3 (222 aa).

Residues 68 to 101 (KPSSLIEPKQPPRVHRSGIKESGSRSRVDSVNSV) form a disordered region. Residues 85–95 (GIKESGSRSRV) are compositionally biased toward basic and acidic residues.

Belongs to the CDI family. ICK/KRP subfamily. As to quaternary structure, specifically interacts with CDKA-1, but not with CDKB1-1.

It is found in the nucleus. The protein localises to the nucleoplasm. Functionally, binds and inhibits CYCD2-1/CDKA-1 complex kinase activity. May target specifically CDKA-1. In Arabidopsis thaliana (Mouse-ear cress), this protein is Cyclin-dependent kinase inhibitor 3 (KRP3).